Consider the following 120-residue polypeptide: MTENRRIKKVNSLLREAIANVILKDVKHPKISNRWITVTRVCLSKDLHSARVYVSIMPHENTSTETLEALKASARYIAYKASKGVVLKYFPEINFYLEDIFSPQDHIENLLWKIREQDKN.

It belongs to the RbfA family. Monomer. Binds 30S ribosomal subunits, but not 50S ribosomal subunits or 70S ribosomes.

It localises to the cytoplasm. One of several proteins that assist in the late maturation steps of the functional core of the 30S ribosomal subunit. Associates with free 30S ribosomal subunits (but not with 30S subunits that are part of 70S ribosomes or polysomes). Required for efficient processing of 16S rRNA. May interact with the 5'-terminal helix region of 16S rRNA. The chain is Ribosome-binding factor A from Chlamydia abortus (strain DSM 27085 / S26/3) (Chlamydophila abortus).